The chain runs to 443 residues: Eukaryotic translation initiation factor 5 (443 aa).

Position 29–36 (29–36 (GRGNGIKT)) interacts with GTP. The span at 147-178 (PEVKKGSKDKKAMRRAEKERLKEGEAADEELK) shows a compositional bias: basic and acidic residues. Disordered regions lie at residues 147–244 (PEVK…LTDT) and 271–293 (EPEKKKKAASNQNGGSQNGNSKN). Positions 179-188 (KVKKEVKKKG) are enriched in basic residues. Residues 207 to 227 (SGSDEDRRSPTHKQIEEKEEA) are compositionally biased toward basic and acidic residues. Residues 228-237 (KDEDDDDDDG) are compositionally biased toward acidic residues. The segment covering 280 to 291 (SNQNGGSQNGNS) has biased composition (low complexity). Residues 284-443 (GGSQNGNSKN…QNAESESDEE (160 aa)) enclose the W2 domain.

It belongs to the eIF-2-beta/eIF-5 family.

Catalyzes the hydrolysis of GTP bound to the 40S ribosomal initiation complex (40S.mRNA.Met-tRNA[F].eIF-2.GTP) with the subsequent joining of a 60S ribosomal subunit resulting in the release of eIF-2 and the guanine nucleotide. The subsequent joining of a 60S ribosomal subunit results in the formation of a functional 80S initiation complex (80S.mRNA.Met-tRNA[F]). The sequence is that of Eukaryotic translation initiation factor 5 (EIF5) from Phaseolus vulgaris (Kidney bean).